The chain runs to 63 residues: Hyphancin-3D (63 aa).

Positions 1–22 (MNFSRIIFLVFACFVALASVSA) are cleaved as a signal peptide. A propeptide spans 23–26 (APEP) (removed by a dipeptidylpeptidase). Leucine 61 is modified (leucine amide).

Belongs to the cecropin family.

It is found in the secreted. Its function is as follows. Has antibacterial activity. The protein is Hyphancin-3D of Hyphantria cunea (Fall webworm moth).